The primary structure comprises 364 residues: Dihydroorotate dehydrogenase (quinone) (364 aa).

Residues 61 to 65 (AGFDK) and Thr85 each bind FMN. A substrate-binding site is contributed by Lys65. Position 110–114 (110–114 (NRMGF)) interacts with substrate. 2 residues coordinate FMN: Asn139 and Asn170. Position 170 (Asn170) interacts with substrate. Ser173 (nucleophile) is an active-site residue. A substrate-binding site is contributed by Asn175. 2 residues coordinate FMN: Lys214 and Ala242. A substrate-binding site is contributed by 243 to 244 (NT). FMN-binding positions include Gly266, Gly295, and 316-317 (YS).

This sequence belongs to the dihydroorotate dehydrogenase family. Type 2 subfamily. Monomer. FMN serves as cofactor.

The protein localises to the cell membrane. The catalysed reaction is (S)-dihydroorotate + a quinone = orotate + a quinol. It functions in the pathway pyrimidine metabolism; UMP biosynthesis via de novo pathway; orotate from (S)-dihydroorotate (quinone route): step 1/1. Functionally, catalyzes the conversion of dihydroorotate to orotate with quinone as electron acceptor. In Rhodopseudomonas palustris (strain BisB5), this protein is Dihydroorotate dehydrogenase (quinone).